We begin with the raw amino-acid sequence, 423 residues long: MDVDIGCYFEEKRYDDKLLDFIRYDVKTPKKTKYILQRPTATDEESVRLQRFYQLGVDLKLKYSKRRSLKKQGRIKNATEELLRLANEQLKLFNRIVERETNWIIYPLWVMAKQLIRLANESSELNKDSIEECGRTIHRSFTICLNDRNPRLNENKKIGCYMFANLEFSIYHRLSNKDMIKNLVKVLESRVNARDIPPLNKSLAMEHKSQVVLYNYYLGQYYGCLENDHERGFFHLNEALLQCPMLYVESTGKFVLQGQMEKIMILLVPLALLTKRLYPHWDHPVIAGVITRSKRLSQVYPTLVRSVISGNLSLYEATAASHERFFLSQGLHVVITLLREVVFTRLVQRCWQWGNDRKSIMPLKILLATKQHDSSANEDEEEQLDALECRLASAIASGLLRAYLSHSNRCIVFSKKEPFPHSK.

Positions 232 to 418 (GFFHLNEALL…RCIVFSKKEP (187 aa)) constitute a PCI domain.

It belongs to the CSN12 family. Component of a COP9 signalosome-like (CSN) complex, composed of RRI1/CSN5, CSN9, RRI2/CSN10, PCI8/CSN11, CSN12 and CSI1. In the complex, it probably interacts directly with RRI1/CSN5, CSN9, RRI2/CSN10 and CSI1. Interacts with SEM1 and THP3.

The protein resides in the cytoplasm. It is found in the nucleus. Functionally, component of the COP9 signalosome (CSN) complex that acts as an regulator of the ubiquitin (Ubl) conjugation pathway by mediating the deneddylation of the cullin subunit of SCF-type E3 ubiquitin-protein ligase complexes. The CSN complex is involved in the regulation of the mating pheromone response. CSN12 forms a complex with THP3 that is recruited to transcribed genes and required for transcription elongation. The polypeptide is Cop9 signalosome complex subunit 12 (CSN12) (Saccharomyces cerevisiae (strain ATCC 204508 / S288c) (Baker's yeast)).